Reading from the N-terminus, the 335-residue chain is Glyceraldehyde-3-phosphate dehydrogenase (335 aa).

Residues 13 to 14 (RI), aspartate 34, methionine 79, and serine 121 contribute to the NAD(+) site. Residues 151–153 (SCT), threonine 182, 211–212 (TG), and arginine 234 contribute to the D-glyceraldehyde 3-phosphate site. The active-site Nucleophile is the cysteine 152. S-nitrosocysteine is present on cysteine 152. Residue asparagine 316 participates in NAD(+) binding.

Belongs to the glyceraldehyde-3-phosphate dehydrogenase family. In terms of assembly, homotetramer. Post-translationally, S-nitrosylation of Cys-152 leads to translocation to the nucleus.

The protein localises to the cytoplasm. It is found in the cytosol. It localises to the cytoskeleton. Its subcellular location is the nucleus. It catalyses the reaction D-glyceraldehyde 3-phosphate + phosphate + NAD(+) = (2R)-3-phospho-glyceroyl phosphate + NADH + H(+). It carries out the reaction S-nitroso-L-cysteinyl-[GAPDH] + L-cysteinyl-[protein] = L-cysteinyl-[GAPDH] + S-nitroso-L-cysteinyl-[protein]. It functions in the pathway carbohydrate degradation; glycolysis; pyruvate from D-glyceraldehyde 3-phosphate: step 1/5. Has both glyceraldehyde-3-phosphate dehydrogenase and nitrosylase activities, thereby playing a role in glycolysis and nuclear functions, respectively. Glyceraldehyde-3-phosphate dehydrogenase is a key enzyme in glycolysis that catalyzes the first step of the pathway by converting D-glyceraldehyde 3-phosphate (G3P) into 3-phospho-D-glyceroyl phosphate. Participates in nuclear events including transcription, RNA transport, DNA replication and apoptosis. Nuclear functions are probably due to the nitrosylase activity that mediates cysteine S-nitrosylation of nuclear target proteins such as SIRT1, HDAC2 and PRKDC. This is Glyceraldehyde-3-phosphate dehydrogenase (gapdh) from Oncorhynchus mykiss (Rainbow trout).